Reading from the N-terminus, the 275-residue chain is Large ribosomal subunit protein uL2c (275 aa).

Disordered stretches follow at residues 1–28 (MGIR…TKSK) and 227–251 (PCDH…TPWG). Positions 10–22 (TPGTRNRSSSDFS) are enriched in polar residues.

Belongs to the universal ribosomal protein uL2 family. As to quaternary structure, part of the 50S ribosomal subunit.

Its subcellular location is the plastid. The protein resides in the chloroplast. The polypeptide is Large ribosomal subunit protein uL2c (rpl2) (Rhodomonas salina (Cryptomonas salina)).